We begin with the raw amino-acid sequence, 349 residues long: MRSVSPQSTMARIPERRVRTLDFAQFRHGEPSGSRGFCRELVDCLSSVGFVKIRNHGISGQEIENVFVMSQLFFSLPQAAKGKAAHPPEANPHRGYSYVGQEKLSRVKDYEKGKREITDVYDIKHYPIDRDARQESYDQGAAVDNLYPNRWPDEQDIPGFRVLMETFYERCHEVHQDILRAIAIGFDLSPSFLTDLCCQNTSELRLNHYPSVHPSSLRKGAKRISEHTDFGTVTLLFQDSVGGLEIEDQNTPGTYFPVLSERKSDIIVNIGDCIQRWTNDKIHSTSHRVVLPEDTDALTKDRYSVAYFGKPSRSQLVGSLREFVKEGEKPKYNDISAWQYNQEKLVLTY.

One can recognise a Fe2OG dioxygenase domain in the interval 200-311 (NTSELRLNHY…RYSVAYFGKP (112 aa)). Histidine 227, aspartate 229, and histidine 287 together coordinate Fe cation. Arginine 302 contributes to the 2-oxoglutarate binding site.

Belongs to the iron/ascorbate-dependent oxidoreductase family. Fe(2+) serves as cofactor.

The enzyme catalyses L-proline + 2-oxoglutarate + O2 = trans-4-hydroxy-L-proline + succinate + CO2. It catalyses the reaction L-proline + 2-oxoglutarate + O2 = trans-3-hydroxy-L-proline + succinate + CO2. It carries out the reaction D-proline + 2-oxoglutarate + O2 = cis-4-hydroxy-D-proline + succinate + CO2. The protein operates within secondary metabolite biosynthesis. Functionally, 2-oxoglutarate-Fe(II) type oxidoreductase; part of the gene cluster that mediates the biosynthesis of pyrrolopyrazines, secondary metabolites showing insecticidal activity. Within the pathway, ppzD converts L-proline into trans-4-hydroxy-L-proline as a major product, yielding a key precursor for peramine biosynthesis. PpzD is also able to convert L-proline into trans-3-hydroxy-L-proline. The single multifunctional NRPS ppzA is sufficient to produce peramine via condensation of 1-pyrroline-5-carboxylate and arginine, N-methylation of the alpha-amino group of arginine and reduction of the thioester and the cyclization to form an iminium ion resulting in release from the peptide synthetase. Deprotonation of this intermediate and oxidation of the pyrroline ring would give rise to peramine. In Epichloe species that produce only peramine, the peramine synthetase gene is not localized in a gene cluster, in contrast to Metarhizium species that contain additional pyrrolopyrazine biosynthesis genes. The 2-oxoglutarate-Fe(II) type oxidoreductase ppzC hydroxylates peramine to yield the newly identified compound 8-hydroxyperamine whereas ppzD converts L-proline into trans-4-hydroxy-L-proline, a precursor of peramine biosynthesis. The protein is 2-oxoglutarate-Fe(II) type oxidoreductase ppzD (ppzD) of Metarhizium majus (strain ARSEF 297).